Consider the following 210-residue polypeptide: Isochorismatase domain-containing protein 2 (210 aa).

S7 is subject to Phosphoserine.

This sequence belongs to the isochorismatase family. In terms of assembly, interacts with CDKN2A.

It localises to the cytoplasm. It is found in the nucleus. In Rattus norvegicus (Rat), this protein is Isochorismatase domain-containing protein 2 (Isoc2).